The primary structure comprises 358 residues: Fructose-bisphosphate aldolase (358 aa).

Serine 61 contributes to the D-glyceraldehyde 3-phosphate binding site. The active-site Proton donor is aspartate 108. Zn(2+) is bound by residues histidine 109, aspartate 143, glutamate 173, and histidine 225. Glycine 226 contacts dihydroxyacetone phosphate. Histidine 264 is a binding site for Zn(2+). Dihydroxyacetone phosphate is bound by residues 265 to 267 (GGS) and 286 to 289 (NIDT). 4 positions are modified to phosphothreonine: threonine 289, threonine 312, threonine 340, and threonine 342.

It belongs to the class II fructose-bisphosphate aldolase family. In terms of assembly, homodimer. Zn(2+) is required as a cofactor.

The catalysed reaction is beta-D-fructose 1,6-bisphosphate = D-glyceraldehyde 3-phosphate + dihydroxyacetone phosphate. It participates in carbohydrate degradation; glycolysis; D-glyceraldehyde 3-phosphate and glycerone phosphate from D-glucose: step 4/4. Functionally, catalyzes the aldol condensation of dihydroxyacetone phosphate (DHAP or glycerone-phosphate) with glyceraldehyde 3-phosphate (G3P) to form fructose 1,6-bisphosphate (FBP) in gluconeogenesis and the reverse reaction in glycolysis. The protein is Fructose-bisphosphate aldolase (fba1) of Schizosaccharomyces pombe (strain 972 / ATCC 24843) (Fission yeast).